The sequence spans 501 residues: MKYILSIDQGTTSSRAMVFDKNANIKGFAQKEFTQIYPQPSWVEHDPTEIWGSQLGVITEAMANARILPNEIDAIGITNQRETTVIWEKNTGKPIYNAIVWQDRRTAKICDQLKKEGKDKIILEKTGLVLDSYFSGTKIMWILDNVEGARQRAENGELCFGTIDTWILWNLTQKKEHATDYSNASRTLLLNIKTLEWDDELLSILNVPRAILPELKESSTIYGKTDKALFGAEIPIAGIAGDQFAATFGQACLKKGMAKNTYGTGCFLTVNIGKEPIISHDKLLTSIAWGRKKSVTYVLEGSVFIGGAVIQWLRDGLEFFRKSSDAEALASSVSDNGGVYFVPAFVGLGAPHWDSYARGTIIGITRGSTKAHITRAALESIAFQSFDILNTMKKSIPNFEIQELRVDGGASQNNLLMQFQADLLECKVVRPKITETTALGAAYLAGLATGYWQSAEEIVSLWQVDKIFEPSMPKNQKEKLLENWNKAVGKAKSWIQNSHSS.

Threonine 11 contacts ADP. The ATP site is built by threonine 11, threonine 12, and serine 13. Threonine 11 lines the sn-glycerol 3-phosphate pocket. Position 15 (arginine 15) interacts with ADP. Residues arginine 81, glutamate 82, tyrosine 133, and aspartate 242 each coordinate sn-glycerol 3-phosphate. The glycerol site is built by arginine 81, glutamate 82, tyrosine 133, aspartate 242, and glutamine 243. ADP contacts are provided by threonine 264 and glycine 307. ATP contacts are provided by threonine 264, glycine 307, glutamine 311, and glycine 409. ADP-binding residues include glycine 409 and asparagine 413.

It belongs to the FGGY kinase family.

The enzyme catalyses glycerol + ATP = sn-glycerol 3-phosphate + ADP + H(+). Its pathway is polyol metabolism; glycerol degradation via glycerol kinase pathway; sn-glycerol 3-phosphate from glycerol: step 1/1. Its activity is regulated as follows. Inhibited by fructose 1,6-bisphosphate (FBP). Key enzyme in the regulation of glycerol uptake and metabolism. Catalyzes the phosphorylation of glycerol to yield sn-glycerol 3-phosphate. This is Glycerol kinase from Borreliella burgdorferi (strain ATCC 35210 / DSM 4680 / CIP 102532 / B31) (Borrelia burgdorferi).